The sequence spans 536 residues: Interferon alpha/beta receptor 2 (536 aa).

The signal sequence occupies residues 1–26 (MLLSQNVSAIGPLNLYPMVHISLVFG). Residues 27 to 246 (ISYVVPDLSD…RESESSEPAT (220 aa)) are Extracellular-facing. 2 disulfides stabilise this stretch: Cys39–Cys122 and Cys85–Cys93. N-linked (GlcNAc...) asparagine glycans are attached at residues Asn58, Asn87, Asn101, Asn147, and Asn191. A disulfide bridge connects residues Cys210 and Cys230. A helical membrane pass occupies residues 247 to 267 (IGGILILFLLAAVCISTVMIL). The Cytoplasmic portion of the chain corresponds to 268–536 (KRIGYICLRN…VRQVNLKNFN (269 aa)). Residue Tyr340 is modified to Phosphotyrosine. A run of 3 repeats spans residues 358–362 (SLEDC), 363–367 (SLEDC), and 368–372 (SLEDC). Positions 358 to 372 (SLEDCSLEDCSLEDC) are 3 X 5 AA tandem repeats of S-L-E-D-C. A disordered region spans residues 369–434 (LEDCSDPSAE…SDSTEGSEGR (66 aa)). Over residues 420–429 (TSEEDSDSTE) the composition is skewed to acidic residues. Residues 432-456 (EGRIVFNVNLNSVCVRALEDDKDSE) form a mediates interaction with STAT2 (and required for the recruitment of USP18) region. Ser480 is subject to Phosphoserine. Residues 487–522 (EEGTQLPFTDPSMECLRPQDALSDKSDTSESDVDIG) form a disordered region. Tyr525 is subject to Phosphotyrosine.

It belongs to the type II cytokine receptor family. Heterodimer with IFNAR1; forming the receptor for type I interferon. Interacts with the transcriptional factors STAT1 and STAT2. Interacts with JAK1. Interacts with USP18; indirectly via STAT2, it negatively regulates the assembly of the ternary interferon-IFNAR1-IFNAR2 complex and therefore type I interferon signaling. Phosphorylated on tyrosine residues upon interferon binding. Phosphorylation at Tyr-340 or Tyr-525 are sufficient to mediate interferon dependent activation of STAT1, STAT2 and STAT3 leading to antiproliferative effects on many different cell types. Expressed in the endometrium. Expressed in all tissues examined except conceptus at day 15 of pregnancy.

The protein localises to the cell membrane. Functionally, together with IFNAR1, forms the heterodimeric receptor for type I interferons (including interferons alpha, beta, epsilon, omega and kappa). Type I interferon binding activates the JAK-STAT signaling cascade, resulting in transcriptional activation or repression of interferon-regulated genes that encode the effectors of the interferon response. Mechanistically, type I interferon-binding brings the IFNAR1 and IFNAR2 subunits into close proximity with one another, driving their associated Janus kinases (JAKs) (TYK2 bound to IFNAR1 and JAK1 bound to IFNAR2) to cross-phosphorylate one another. The activated kinases phosphorylate specific tyrosine residues on the intracellular domains of IFNAR1 and IFNAR2, forming docking sites for the STAT transcription factors (STAT1, STAT2 and STAT). STAT proteins are then phosphorylated by the JAKs, promoting their translocation into the nucleus to regulate expression of interferon-regulated genes. The sequence is that of Interferon alpha/beta receptor 2 (IFNAR2) from Ovis aries (Sheep).